Reading from the N-terminus, the 478-residue chain is Protein nucleotidyltransferase YdiU (478 aa).

ATP contacts are provided by Gly-84, Gly-86, Arg-87, Lys-107, Asp-119, Gly-120, Arg-170, and Arg-177. The Proton acceptor role is filled by Asp-246. Residues Asn-247 and Asp-256 each coordinate Mg(2+). Residue Asp-256 participates in ATP binding.

This sequence belongs to the SELO family. Mg(2+) serves as cofactor. Mn(2+) is required as a cofactor.

The catalysed reaction is L-seryl-[protein] + ATP = 3-O-(5'-adenylyl)-L-seryl-[protein] + diphosphate. The enzyme catalyses L-threonyl-[protein] + ATP = 3-O-(5'-adenylyl)-L-threonyl-[protein] + diphosphate. It carries out the reaction L-tyrosyl-[protein] + ATP = O-(5'-adenylyl)-L-tyrosyl-[protein] + diphosphate. It catalyses the reaction L-histidyl-[protein] + UTP = N(tele)-(5'-uridylyl)-L-histidyl-[protein] + diphosphate. The catalysed reaction is L-seryl-[protein] + UTP = O-(5'-uridylyl)-L-seryl-[protein] + diphosphate. The enzyme catalyses L-tyrosyl-[protein] + UTP = O-(5'-uridylyl)-L-tyrosyl-[protein] + diphosphate. Nucleotidyltransferase involved in the post-translational modification of proteins. It can catalyze the addition of adenosine monophosphate (AMP) or uridine monophosphate (UMP) to a protein, resulting in modifications known as AMPylation and UMPylation. This Escherichia coli O17:K52:H18 (strain UMN026 / ExPEC) protein is Protein nucleotidyltransferase YdiU.